A 396-amino-acid polypeptide reads, in one-letter code: tRNA (guanine-N(7)-)-methyltransferase non-catalytic subunit wuho (396 aa).

4 WD repeats span residues lysine 75 to leucine 115, glycine 162 to serine 201, glycine 205 to leucine 243, and alanine 302 to glycine 342.

The protein belongs to the WD repeat TRM82 family. In terms of assembly, forms a heterodimer with the catalytic subunit Mettl1. Interacts with mei-P26 and weakly interacts with bgcn; required for the function or formation of the mei-P26-bgcn-bam-sxl complex. Interacts with nanos; may be involved in mei-P26-dependent derepression of the BMP signaling pathway. Interacts with Myc; the interaction may be mediated by mei-P26 and may be involved in the regulation of ribosome biogenesis. In terms of tissue distribution, in testis, it is present at high level in hub cells, a niche for germline stem cells of testis. Ubiquitously expressed in all testicular cells throughout spermatogenesis. Ubiquitously expressed in all germline and somatic cells of the ovary.

Its subcellular location is the nucleus. It is found in the cytoplasm. Its pathway is tRNA modification; N(7)-methylguanine-tRNA biosynthesis. Functionally, required for the Mettl1-dependent formation of N(7)-methylguanine at position 46 (m7G46) in tRNA. In the Mettl1-wuho methyltransferase complex, it is required to stabilize and induce conformational changes of the catalytic subunit. Required for binding of nanos mRNA and repression of translation by the mei-P26-bgcn-bam-sxl complex. May cooperate with mei-P26 and nanos to derepress the BMP signaling pathway. May cooperate with mei-P26 to suppress expression of a subset of microRNAs. May cooperate with mei-P26 to regulate bam expression levels in germline cells during gametogenesis. Required to promote mitosis to meiosis transition during gametogenesis. May regulate germline cell division in part by regulating ribosome biogenesis. The polypeptide is tRNA (guanine-N(7)-)-methyltransferase non-catalytic subunit wuho (Drosophila pseudoobscura pseudoobscura (Fruit fly)).